A 272-amino-acid polypeptide reads, in one-letter code: NH(3)-dependent NAD(+) synthetase (272 aa).

Position 45 to 52 (45 to 52 (GISGGQDS)) interacts with ATP. Residue D51 participates in Mg(2+) binding. R138 serves as a coordination point for deamido-NAD(+). An ATP-binding site is contributed by T158. E163 provides a ligand contact to Mg(2+). Residues K171 and D178 each contribute to the deamido-NAD(+) site. 2 residues coordinate ATP: K187 and T209. 258–259 (HK) lines the deamido-NAD(+) pocket.

This sequence belongs to the NAD synthetase family. Homodimer.

It carries out the reaction deamido-NAD(+) + NH4(+) + ATP = AMP + diphosphate + NAD(+) + H(+). The protein operates within cofactor biosynthesis; NAD(+) biosynthesis; NAD(+) from deamido-NAD(+) (ammonia route): step 1/1. Its function is as follows. Catalyzes the ATP-dependent amidation of deamido-NAD to form NAD. Uses ammonia as a nitrogen source. The sequence is that of NH(3)-dependent NAD(+) synthetase from Bacillus cereus (strain AH187).